The following is a 514-amino-acid chain: Ras-GEF domain-containing family member 1B-A (514 aa).

The 131-residue stretch at 76 to 206 (HDNNLISGSL…MTQTLIRKLT (131 aa)) folds into the N-terminal Ras-GEF domain. In terms of domain architecture, Ras-GEF spans 246–494 (DPFTLAQQLT…YLASYESEGP (249 aa)).

As to expression, detected in oocytes, and in embryos at 4 to 120 hours post-fertilization (hpf). Detected along marginal blastomeres at early epiboly stage and throughout the margin at the onset of gastrulation. At 60% epiboly, strongest expression is found in the dorsal shield region and is restricted to the epiblast. Detected in the anterior border of the presomitic mesoderm at the end of epiboly. Detected in adaxial cells, in the somites and in the nervous system during somitogenesis. Detected in diencephalon and hindbrain and in cells surrounding the notochord, including adaxial cells and ventral mesendoderm, in 15-somite stage embryos. At 48 hpf, detected mainly in the brain.

Functionally, guanine nucleotide exchange factor (GEF) for Ras family proteins (in vitro). The chain is Ras-GEF domain-containing family member 1B-A (rasgef1ba) from Danio rerio (Zebrafish).